A 192-amino-acid chain; its full sequence is Xanthine phosphoribosyltransferase (192 aa).

Residues Leu20 and Asn27 each coordinate xanthine. A 5-phospho-alpha-D-ribose 1-diphosphate-binding site is contributed by 128–132; it reads ANGQA. Position 156 (Lys156) interacts with xanthine.

Belongs to the purine/pyrimidine phosphoribosyltransferase family. Xpt subfamily. As to quaternary structure, homodimer.

It localises to the cytoplasm. The enzyme catalyses XMP + diphosphate = xanthine + 5-phospho-alpha-D-ribose 1-diphosphate. Its pathway is purine metabolism; XMP biosynthesis via salvage pathway; XMP from xanthine: step 1/1. Converts the preformed base xanthine, a product of nucleic acid breakdown, to xanthosine 5'-monophosphate (XMP), so it can be reused for RNA or DNA synthesis. This chain is Xanthine phosphoribosyltransferase, found in Ligilactobacillus salivarius (strain UCC118) (Lactobacillus salivarius).